The chain runs to 1283 residues: Peroxisomal ATPase PEX1 (1283 aa).

The segment at 346–367 is disordered; that stretch reads SKTKQNVLSPEKEKQMSEPLDQ. Position 354 is a phosphoserine (Ser354). Positions 355-367 are enriched in basic and acidic residues; sequence PEKEKQMSEPLDQ. Residues 599–606 and 881–888 contribute to the ATP site; these read GGKGSGKS and GPPGTGKT. Residues Ser1181, Ser1209, and Ser1211 each carry the phosphoserine modification. The disordered stretch occupies residues 1260–1283; sequence FQNPKRRKNQSGTMFRPGQKVTLA.

It belongs to the AAA ATPase family. In terms of assembly, homooligomer; homooligomerizes in the cytosol, interaction with PEX6 promotes dissociation of the homooligomer. Interacts with PEX6; forming the PEX1-PEX6 AAA ATPase complex, which is composed of a heterohexamer formed by a trimer of PEX1-PEX6 dimers. Interacts indirectly with PEX26, via its interaction with PEX6.

Its subcellular location is the cytoplasm. It is found in the cytosol. It localises to the peroxisome membrane. The enzyme catalyses ATP + H2O = ADP + phosphate + H(+). In terms of biological role, component of the PEX1-PEX6 AAA ATPase complex, a protein dislocase complex that mediates the ATP-dependent extraction of the PEX5 receptor from peroxisomal membranes, an essential step for PEX5 recycling. Specifically recognizes PEX5 monoubiquitinated at 'Cys-11', and pulls it out of the peroxisome lumen through the PEX2-PEX10-PEX12 retrotranslocation channel. Extraction by the PEX1-PEX6 AAA ATPase complex is accompanied by unfolding of the TPR repeats and release of bound cargo from PEX5. In Homo sapiens (Human), this protein is Peroxisomal ATPase PEX1.